We begin with the raw amino-acid sequence, 942 residues long: MGCSVVGNCKSVMLMSRMSWSKLALLISVAMAAAMTDSPPTLICMGILVSVVLNWIVCAVCEEASELILGVSLETTRPSPARVIGEPVFDPRYGYVAPAIYDGKSFDVILPISALSSASTRKETVEMAVENSRLQPLESSQTPKSLVALYSQDLLSGWGSRIKGPDGQEYLLTALHVWETNISHLCKDGKKVPISGCPIVASSADSDLDFVLVSVPKNAWSVLGVGVARLELLKRRTVVTVYGGLDSKTTYCATGVAELENPFRIVTKVTTTGGWSGSPLYHKDAIVGLHLGARPSAGVNRACNVAMAFRVVRKFVTVENSELYPDQSSGPARELDAETYTERLEQGIAFTEYNISGITVKTSDREWTTAEALRVARYKPLGGGKAWGDSDDEDTQETAIRPLNLPAGGLPTGQSALGQLIEYAGYVWRDEGIINSNGMPFRSAGKSSCRFREAVCRAVHRDVRAAETEFPELKELAWPSRGSKAEIGSLLFQAGRFERVEAPANLQLAITNLQAQYPRSRPRSCFRREPWCREDFVAEIEKIAHSGEINLKASPGVPLAEIGVSNQQVIDVAWPLVCEAVVERLHALASVDPRQHDWSPEELVKRGLCDPVRLFVKQEPHSRQKIEQGRFRLISSVSLVDQLVERMLFGPQNTTEIALWHSNPSKPGMGLSKASQVALLWEDLARKHQTHPGAMADISGFDWSVQDWELWADVSMRIELGSFPALMAKAAISRFYCLMNATFQLTNGELLTQELPGLMKSGSYCTSSSNSRIRCLMAELIGSPWCIAMGDDSVEGWVDDAPRKYSALGHLCKEYEACPVLPNGDLKEVSFCSHLISKGRAELETWPKCLFRYLSGPHDVESLEMELSSSRRWGQIVRYLRRIGRVSGNDGEERSSNESPATTKTQGSAAAWGPPQEAWPVDGASLSTFEPSSSGWFHLEGW.

Helical transmembrane passes span 10–30 and 41–61; these read KSVM…ISVA and TLIC…CAVC. One can recognise a Peptidase S39 domain in the interval 129–326; the sequence is VENSRLQPLE…TVENSELYPD (198 aa). Residues histidine 176, aspartate 209, and serine 276 each act as for protease activity in the active site. Threonine 339 carries the post-translational modification Phosphothreonine; by host. Position 390 is a phosphoserine; by host (serine 390). Residues 691–805 enclose the RdRp catalytic domain; sequence HPGAMADISG…GWVDDAPRKY (115 aa). A disordered region spans residues 888 to 917; it reads GNDGEERSSNESPATTKTQGSAAAWGPPQE. Residues 897–908 are compositionally biased toward polar residues; that stretch reads NESPATTKTQGS.

Post-translationally, the polyprotein is proteolytically cleaved into several chains by the viral protease.

The protein localises to the host membrane. It carries out the reaction RNA(n) + a ribonucleoside 5'-triphosphate = RNA(n+1) + diphosphate. In terms of biological role, responsible for cleavage of polyprotein P2A and replicase polyprotein P2AB. Covalently attached to the 5' extremity of the genomic and subgenomic RNAs. It may serve as a primer for the replicase. Functionally, replicates the viral genome. This Dactylis glomerata (Orchard grass) protein is Replicase polyprotein P2AB.